The following is a 475-amino-acid chain: MNTTIAQQIAKEGGVEAYLHAQQHKSLLRFLTCGSVDDGKSTLIGRLLHDTRQIYEDQLSSLHNDSKRHGTQGEKLDLALLVDGLQAEREQGITIDVAYRYFSTEKRKFIIADTPGHEQYTRNMATGASTCDLAILLMDARKGVLDQTRRHSFISTLLGIKHLVVAVNKMDLVDFSEETFERIRQDYLTFAGQLPGNLDIRFVPLSALEGDNVAVQSQNMPWYTGPTLLEVLENIEIQRVVDEQPLRFPVQYVNRPNLDFRGYAGTVAGGVVKVGQRVKALPSGVESSVARIVTFDGDLEEAGAGEAVTLVLKDEIDISRGDLLVDASQTLAAVQSAAVDVVWMAEQPLVPGQSYDIKIAGKKTRARVDNIHYQVDINNLTQRVVENLPLNGIGLVDLTFDEPLNLDKYQENPVTGGLIFIDRLSNVTVGAGMVREPQQNVYQEPSAFSAFELELNQLIRRHFPHWGARDLLGGK.

The tr-type G domain occupies 25–241 (KSLLRFLTCG…LENIEIQRVV (217 aa)). The interval 34–41 (GSVDDGKS) is G1. GTP is bound at residue 34-41 (GSVDDGKS). The interval 92–96 (GITID) is G2. Residues 113–116 (DTPG) are G3. GTP contacts are provided by residues 113-117 (DTPGH) and 168-171 (NKMD). Residues 168–171 (NKMD) form a G4 region. The G5 stretch occupies residues 206 to 208 (SAL).

The protein belongs to the TRAFAC class translation factor GTPase superfamily. Classic translation factor GTPase family. CysN/NodQ subfamily. In terms of assembly, heterodimer composed of CysD, the smaller subunit, and CysN.

The catalysed reaction is sulfate + ATP + H(+) = adenosine 5'-phosphosulfate + diphosphate. Its pathway is sulfur metabolism; hydrogen sulfide biosynthesis; sulfite from sulfate: step 1/3. Functionally, with CysD forms the ATP sulfurylase (ATPS) that catalyzes the adenylation of sulfate producing adenosine 5'-phosphosulfate (APS) and diphosphate, the first enzymatic step in sulfur assimilation pathway. APS synthesis involves the formation of a high-energy phosphoric-sulfuric acid anhydride bond driven by GTP hydrolysis by CysN coupled to ATP hydrolysis by CysD. This is Sulfate adenylyltransferase subunit 1 from Cronobacter sakazakii (strain ATCC BAA-894) (Enterobacter sakazakii).